The chain runs to 158 residues: S-ribosylhomocysteine lyase (158 aa).

Residues His-57, His-61, and Cys-125 each coordinate Fe cation.

The protein belongs to the LuxS family. In terms of assembly, homodimer. The cofactor is Fe cation.

The enzyme catalyses S-(5-deoxy-D-ribos-5-yl)-L-homocysteine = (S)-4,5-dihydroxypentane-2,3-dione + L-homocysteine. Functionally, involved in the synthesis of autoinducer 2 (AI-2) which is secreted by bacteria and is used to communicate both the cell density and the metabolic potential of the environment. The regulation of gene expression in response to changes in cell density is called quorum sensing. Catalyzes the transformation of S-ribosylhomocysteine (RHC) to homocysteine (HC) and 4,5-dihydroxy-2,3-pentadione (DPD). This Deinococcus radiodurans (strain ATCC 13939 / DSM 20539 / JCM 16871 / CCUG 27074 / LMG 4051 / NBRC 15346 / NCIMB 9279 / VKM B-1422 / R1) protein is S-ribosylhomocysteine lyase.